A 320-amino-acid chain; its full sequence is Ferrochelatase (320 aa).

Fe cation contacts are provided by histidine 194 and glutamate 275.

This sequence belongs to the ferrochelatase family.

The protein localises to the cytoplasm. The enzyme catalyses heme b + 2 H(+) = protoporphyrin IX + Fe(2+). The protein operates within porphyrin-containing compound metabolism; protoheme biosynthesis; protoheme from protoporphyrin-IX: step 1/1. Functionally, catalyzes the ferrous insertion into protoporphyrin IX. The protein is Ferrochelatase of Xylella fastidiosa (strain M23).